Reading from the N-terminus, the 364-residue chain is D-alanine--D-alanine ligase (364 aa).

Residues 145–354 enclose the ATP-grasp domain; sequence KMAFEQAGLP…FPELVDKLVQ (210 aa). 181-236 serves as a coordination point for ATP; the sequence is EASLGYPCFVKPANLGSSVGISKVRSRQELEDALDNAANYDRRIIIEAGVAAREVE. Mg(2+) is bound by residues D307, E321, and N323.

It belongs to the D-alanine--D-alanine ligase family. Mg(2+) is required as a cofactor. The cofactor is Mn(2+).

The protein localises to the cytoplasm. The catalysed reaction is 2 D-alanine + ATP = D-alanyl-D-alanine + ADP + phosphate + H(+). Its pathway is cell wall biogenesis; peptidoglycan biosynthesis. Its function is as follows. Cell wall formation. The chain is D-alanine--D-alanine ligase from Nostoc sp. (strain PCC 7120 / SAG 25.82 / UTEX 2576).